Consider the following 324-residue polypeptide: CYFIP-related Rac1 interactor B (324 aa).

A lipid anchor (N-myristoyl glycine) is attached at G2. K74 participates in a covalent cross-link: Glycyl lysine isopeptide (Lys-Gly) (interchain with G-Cter in ubiquitin).

It belongs to the CYRI family. In terms of assembly, interacts with RAC1 (GTP-bound form preferentially). Ubiquitinated at Lys-74 upon Salmonella bacterial infection.

Its subcellular location is the membrane. It localises to the mitochondrion. Functionally, negatively regulates RAC1 signaling and RAC1-driven cytoskeletal remodeling. Regulates chemotaxis, cell migration and epithelial polarization by controlling the polarity, plasticity, duration and extent of protrusions. Limits Rac1 mediated activation of the Scar/WAVE complex, focuses protrusion signals and regulates pseudopod complexity by inhibiting Scar/WAVE-induced actin polymerization. Protects against Salmonella bacterial infection. Attenuates processes such as macropinocytosis, phagocytosis and cell migration and restrict sopE-mediated bacterial entry. Also restricts infection mediated by Mycobacterium tuberculosis and Listeria monocytogenes. Involved in the regulation of mitochondrial dynamics and oxidative stress. This is CYFIP-related Rac1 interactor B from Homo sapiens (Human).